The chain runs to 910 residues: Valine--tRNA ligase (910 aa).

A 'HIGH' region motif is present at residues 46 to 56 (PNVTGSLHMGH). A 'KMSKS' region motif is present at residues 539 to 543 (KMSKS). Residue lysine 542 coordinates ATP. Positions 845 to 909 (DLDILRNKIQ…QMLQERLKML (65 aa)) form a coiled coil.

Belongs to the class-I aminoacyl-tRNA synthetase family. ValS type 1 subfamily. In terms of assembly, monomer.

The protein resides in the cytoplasm. The catalysed reaction is tRNA(Val) + L-valine + ATP = L-valyl-tRNA(Val) + AMP + diphosphate. In terms of biological role, catalyzes the attachment of valine to tRNA(Val). As ValRS can inadvertently accommodate and process structurally similar amino acids such as threonine, to avoid such errors, it has a 'posttransfer' editing activity that hydrolyzes mischarged Thr-tRNA(Val) in a tRNA-dependent manner. The protein is Valine--tRNA ligase of Synechocystis sp. (strain ATCC 27184 / PCC 6803 / Kazusa).